We begin with the raw amino-acid sequence, 1025 residues long: Multidrug resistance protein MdtC (1025 aa).

The next 12 membrane-spanning stretches (helical) occupy residues 3–23, 333–353, 360–380, 387–407, 431–451, 463–483, 528–548, 853–873, 875–895, 897–917, 953–973, and 984–1004; these read FFAL…AITL, EVEQ…FLFL, IIPA…MYLC, LSLM…IVVL, VGFT…PLLL, FAVT…TLTP, LVGV…ISIP, VILI…LYES, VHPL…LLAL, LFNA…IGIV, PIMM…LSGG, and ITIV…TPVV.

It belongs to the resistance-nodulation-cell division (RND) (TC 2.A.6) family. MdtC subfamily. Part of a tripartite efflux system composed of MdtA, MdtB and MdtC. MdtC forms a heteromultimer with MdtB.

The protein resides in the cell inner membrane. Functionally, the MdtABC tripartite complex confers resistance against novobiocin and deoxycholate. The polypeptide is Multidrug resistance protein MdtC (Escherichia coli O8 (strain IAI1)).